Reading from the N-terminus, the 193-residue chain is Xanthine phosphoribosyltransferase (193 aa).

Xanthine-binding residues include Leu-20 and Thr-27. 128-132 (ANGQA) contributes to the 5-phospho-alpha-D-ribose 1-diphosphate binding site. Lys-156 serves as a coordination point for xanthine.

It belongs to the purine/pyrimidine phosphoribosyltransferase family. Xpt subfamily. In terms of assembly, homodimer.

The protein resides in the cytoplasm. The catalysed reaction is XMP + diphosphate = xanthine + 5-phospho-alpha-D-ribose 1-diphosphate. It functions in the pathway purine metabolism; XMP biosynthesis via salvage pathway; XMP from xanthine: step 1/1. Converts the preformed base xanthine, a product of nucleic acid breakdown, to xanthosine 5'-monophosphate (XMP), so it can be reused for RNA or DNA synthesis. This chain is Xanthine phosphoribosyltransferase, found in Streptococcus pneumoniae serotype 19F (strain G54).